The chain runs to 153 residues: Large ribosomal subunit protein uL30 (153 aa).

Belongs to the universal ribosomal protein uL30 family. In terms of assembly, part of the 50S ribosomal subunit.

This chain is Large ribosomal subunit protein uL30, found in Methanoculleus marisnigri (strain ATCC 35101 / DSM 1498 / JR1).